We begin with the raw amino-acid sequence, 201 residues long: Probable molybdenum cofactor guanylyltransferase (201 aa).

GTP-binding positions include 16–18 (LAG), Lys28, Asp75, and Asp107. Mg(2+) is bound at residue Asp107.

Belongs to the MobA family. Mg(2+) is required as a cofactor.

It localises to the cytoplasm. The enzyme catalyses Mo-molybdopterin + GTP + H(+) = Mo-molybdopterin guanine dinucleotide + diphosphate. Transfers a GMP moiety from GTP to Mo-molybdopterin (Mo-MPT) cofactor (Moco or molybdenum cofactor) to form Mo-molybdopterin guanine dinucleotide (Mo-MGD) cofactor. The protein is Probable molybdenum cofactor guanylyltransferase of Mycobacterium marinum (strain ATCC BAA-535 / M).